We begin with the raw amino-acid sequence, 343 residues long: HTH-type transcriptional regulator GntR (343 aa).

One can recognise an HTH lacI-type domain in the interval Pro16–Ser70. A DNA-binding region (H-T-H motif) is located at residues Leu18–Arg37.

Free GntR fails to recognize gluconate and 6-phosphogluconate, whereas the GntR/DNA complexes recognize both ligands. It is therefore likely that GntR DNA binding induces structural changes that permit GntR to recognize effectors. Involved in the regulation of glucose metabolism. Represses its own expression as well as that of the gluconate permease GntP. It employs an effector mediated de-repression mechanism: in the absence of ligand, GntR binds to the gntR and gntP promoters and represses their expression. The release of promoter bound GntR is induced by gluconate and 6-phosphogluconate that bind with similar apparent affinities to the GntR/DNA complex. The release of GntR leads to transcription of the genes. The protein is HTH-type transcriptional regulator GntR of Pseudomonas aeruginosa (strain ATCC 15692 / DSM 22644 / CIP 104116 / JCM 14847 / LMG 12228 / 1C / PRS 101 / PAO1).